The following is a 495-amino-acid chain: Meiosis-specific nuclear structural protein 1 (495 aa).

Residues 1–314 (MASKRRNMSC…KLEEMLRQRE (314 aa)) are interaction with BBOF1. Residues 59 to 410 (LLQNEQFELD…QLEHRRAVEK (352 aa)) are a coiled coil. Tyrosine 188 carries the phosphotyrosine modification.

It belongs to the MNS1 family. As to quaternary structure, able to form oligomers. Microtubule inner protein component of sperm flagellar doublet microtubules. Interacts with ODAD1. Interacts with BBOF1.

Its subcellular location is the nucleus. The protein localises to the cytoplasm. The protein resides in the cytoskeleton. It is found in the cilium axoneme. It localises to the flagellum axoneme. Functionally, microtubule inner protein (MIP) part of the dynein-decorated doublet microtubules (DMTs) in cilia axoneme, which is required for motile cilia beating. May play a role in the control of meiotic division and germ cell differentiation through regulation of pairing and recombination during meiosis. Required for sperm flagella assembly. May play a role in the assembly and function of the outer dynein arm-docking complex (ODA-DC). ODA-DC mediates outer dynein arms (ODA) binding onto the axonemal doublet microtubules. This is Meiosis-specific nuclear structural protein 1 (MNS1) from Macaca fascicularis (Crab-eating macaque).